The sequence spans 453 residues: MEQQPSVPRSCTNVARETPMNLNIQSTTGTRYELSVPPDETVDGLKRRISQRLKVPKDRLTLLHRETRLSSGKLQDLGISDGSRLTLLPSVEAGLMSQMSRPEQSVMQALESLTETQVNDFLSGRSPLTLALRVGDHMMFVQLQLAAQQSGSSHLQHRHVITRGAETSASPQYRTLHTSTSAVSHLASCTPGPTPPTTLSPTSSTHCNGPHSSPLTTSVFRSHGEGVAVSPCAEQAPCSTRGTEGTSSSPSSRSRKPGAIIESFVNHAPGVFSGTFSGTLHPQCQDSAGRPRRDIGTILQILNDLLSATRHYQGMPPSLTTLRCHTQCASQARNAKATSPQSTSPQQTTHPVGHCQTQTRTYKPSGDRLRQTENRATRCKVERLQLLMHQKRLRRKARRDSRAPYHWMPTRKSSRTSSNSSTSSGEGSLEIDFEDSLWKPDVKAELNSEFVVA.

In terms of domain architecture, Ubiquitin-like spans 20 to 94; it reads MNLNIQSTTG…LTLLPSVEAG (75 aa). 4 disordered regions span residues 184-219, 232-256, 333-376, and 390-429; these read SHLASCTPGPTPPTTLSPTSSTHCNGPHSSPLTTSV, CAEQAPCSTRGTEGTSSSPSSRSRK, RNAK…ENRA, and QKRLRRKARRDSRAPYHWMPTRKSSRTSSNSSTSSGEGSL. Residues 206-219 show a composition bias toward polar residues; sequence HCNGPHSSPLTTSV. 2 stretches are compositionally biased toward low complexity: residues 239–252 and 338–351; these read STRGTEGTSSSPSS and TSPQSTSPQQTTHP. A compositionally biased stretch (basic and acidic residues) spans 365–376; sequence SGDRLRQTENRA. The segment covering 390 to 399 has biased composition (basic residues); it reads QKRLRRKARR. Residues 415 to 428 show a composition bias toward low complexity; that stretch reads RTSSNSSTSSGEGS.

The protein resides in the nucleus. It localises to the cytoplasm. Its subcellular location is the cytosol. The protein localises to the nucleolus. Facilitates ubiquitin-independent proteasomal degradation of polycomb protein CBX4. Plays a role in inhibiting the activity of glucokinase GCK and both glucose-induced and basal insulin secretion. The chain is Midnolin-A (midn-a) from Xenopus laevis (African clawed frog).